The chain runs to 112 residues: T cell receptor alpha variable 17 (112 aa).

The first 21 residues, 1-21 (METLLGVSLVILWLQLARVNS), serve as a signal peptide directing secretion. The region spanning 22–112 (QQGEEDPQAL…DTASYFCATD (91 aa)) is the Ig-like domain. Asn38 and Asn42 each carry an N-linked (GlcNAc...) asparagine glycan. An intrachain disulfide couples Cys43 to Cys109.

In terms of assembly, alpha-beta TR is a heterodimer composed of an alpha and beta chain; disulfide-linked. The alpha-beta TR is associated with the transmembrane signaling CD3 coreceptor proteins to form the TR-CD3 (TcR or TCR). The assembly of alpha-beta TR heterodimers with CD3 occurs in the endoplasmic reticulum where a single alpha-beta TR heterodimer associates with one CD3D-CD3E heterodimer, one CD3G-CD3E heterodimer and one CD247 homodimer forming a stable octameric structure. CD3D-CD3E and CD3G-CD3E heterodimers preferentially associate with TR alpha and TR beta chains, respectively. The association of the CD247 homodimer is the last step of TcR assembly in the endoplasmic reticulum and is required for transport to the cell surface.

Its subcellular location is the cell membrane. Its function is as follows. V region of the variable domain of T cell receptor (TR) alpha chain that participates in the antigen recognition. Alpha-beta T cell receptors are antigen specific receptors which are essential to the immune response and are present on the cell surface of T lymphocytes. Recognize peptide-major histocompatibility (MH) (pMH) complexes that are displayed by antigen presenting cells (APC), a prerequisite for efficient T cell adaptive immunity against pathogens. Binding of alpha-beta TR to pMH complex initiates TR-CD3 clustering on the cell surface and intracellular activation of LCK that phosphorylates the ITAM motifs of CD3G, CD3D, CD3E and CD247 enabling the recruitment of ZAP70. In turn ZAP70 phosphorylates LAT, which recruits numerous signaling molecules to form the LAT signalosome. The LAT signalosome propagates signal branching to three major signaling pathways, the calcium, the mitogen-activated protein kinase (MAPK) kinase and the nuclear factor NF-kappa-B (NF-kB) pathways, leading to the mobilization of transcription factors that are critical for gene expression and essential for T cell growth and differentiation. The T cell repertoire is generated in the thymus, by V-(D)-J rearrangement. This repertoire is then shaped by intrathymic selection events to generate a peripheral T cell pool of self-MH restricted, non-autoaggressive T cells. Post-thymic interaction of alpha-beta TR with the pMH complexes shapes TR structural and functional avidity. This Homo sapiens (Human) protein is T cell receptor alpha variable 17.